Here is a 216-residue protein sequence, read N- to C-terminus: Small ribosomal subunit protein uS5 (216 aa).

Positions 1 to 55 (MDRKLENQKDLLNQDPKVELNSQSVAKNPLNSREVKPIQRRRPLRKNSRDKNSKP) are disordered. Over residues 20-31 (LNSQSVAKNPLN) the composition is skewed to polar residues. Residues 57–120 (FEERVIAIHR…KDAQNRLVSV (64 aa)) enclose the S5 DRBM domain.

This sequence belongs to the universal ribosomal protein uS5 family. In terms of assembly, part of the 30S ribosomal subunit. Contacts proteins S4 and S8.

In terms of biological role, with S4 and S12 plays an important role in translational accuracy. Located at the back of the 30S subunit body where it stabilizes the conformation of the head with respect to the body. This chain is Small ribosomal subunit protein uS5, found in Mesomycoplasma hyopneumoniae (strain J / ATCC 25934 / NCTC 10110) (Mycoplasma hyopneumoniae).